The primary structure comprises 432 residues: Enolase (432 aa).

Glutamine 167 lines the (2R)-2-phosphoglycerate pocket. Glutamate 209 functions as the Proton donor in the catalytic mechanism. Positions 246, 289, and 316 each coordinate Mg(2+). (2R)-2-phosphoglycerate contacts are provided by lysine 341, arginine 370, serine 371, and lysine 392. Residue lysine 341 is the Proton acceptor of the active site.

The protein belongs to the enolase family. Requires Mg(2+) as cofactor.

It is found in the cytoplasm. Its subcellular location is the secreted. It localises to the cell surface. It catalyses the reaction (2R)-2-phosphoglycerate = phosphoenolpyruvate + H2O. It functions in the pathway carbohydrate degradation; glycolysis; pyruvate from D-glyceraldehyde 3-phosphate: step 4/5. Functionally, catalyzes the reversible conversion of 2-phosphoglycerate (2-PG) into phosphoenolpyruvate (PEP). It is essential for the degradation of carbohydrates via glycolysis. This Thermotoga neapolitana (strain ATCC 49049 / DSM 4359 / NBRC 107923 / NS-E) protein is Enolase.